Consider the following 119-residue polypeptide: Large ribosomal subunit protein bL20 (119 aa).

This sequence belongs to the bacterial ribosomal protein bL20 family.

In terms of biological role, binds directly to 23S ribosomal RNA and is necessary for the in vitro assembly process of the 50S ribosomal subunit. It is not involved in the protein synthesizing functions of that subunit. This is Large ribosomal subunit protein bL20 from Caldanaerobacter subterraneus subsp. tengcongensis (strain DSM 15242 / JCM 11007 / NBRC 100824 / MB4) (Thermoanaerobacter tengcongensis).